The following is a 107-amino-acid chain: 2Fe-2S ferredoxin CtmE (107 aa).

The 2Fe-2S ferredoxin-type domain maps to valine 3 to glutamate 106. Residues cysteine 41, cysteine 47, cysteine 50, and cysteine 87 each contribute to the [2Fe-2S] cluster site.

Belongs to the adrenodoxin/putidaredoxin family. [2Fe-2S] cluster is required as a cofactor.

It participates in terpene metabolism; monoterpene degradation. In terms of biological role, involved in the degradation of the cyclic monoterpene limonene. Probably part of an electron transfer system involved in the oxidation of limonene to perillyl alcohol. The protein is 2Fe-2S ferredoxin CtmE of Castellaniella defragrans (strain DSM 12143 / CCUG 39792 / 65Phen) (Alcaligenes defragrans).